Here is a 144-residue protein sequence, read N- to C-terminus: Large ribosomal subunit protein uL15 (144 aa).

The span at 1 to 16 (MVVRKEKKSRKYRGYR) shows a compositional bias: basic residues. Residues 1-35 (MVVRKEKKSRKYRGYRTHGWGTKGQHRDRGAQGGR) are disordered.

The protein belongs to the universal ribosomal protein uL15 family. Part of the 50S ribosomal subunit.

In terms of biological role, binds to the 23S rRNA. In Sulfolobus acidocaldarius (strain ATCC 33909 / DSM 639 / JCM 8929 / NBRC 15157 / NCIMB 11770), this protein is Large ribosomal subunit protein uL15.